Consider the following 311-residue polypeptide: Protoheme IX farnesyltransferase (311 aa).

The next 8 membrane-spanning stretches (helical) occupy residues 19–39 (VLAYIALTKPRVIELLLVATI), 55–75 (ILATLFGGWMGAASANTLNCV), 101–121 (NAFVFGVVLGLASFAWLWWQA), 123–143 (LLSGALVVATILFYVFVYTLG), 169–189 (AVTGTIGWPALALFGVIFFWT), 221–241 (VTKQIVIYTWLTVLTTLALVP), 242–262 (ATGVIYAAVALVAGAWFLLMA), and 290–310 (VVFCGLAVDSVLGWDTIGSFF).

Belongs to the UbiA prenyltransferase family. Protoheme IX farnesyltransferase subfamily.

The protein resides in the cell membrane. The enzyme catalyses heme b + (2E,6E)-farnesyl diphosphate + H2O = Fe(II)-heme o + diphosphate. It participates in porphyrin-containing compound metabolism; heme O biosynthesis; heme O from protoheme: step 1/1. In terms of biological role, converts heme B (protoheme IX) to heme O by substitution of the vinyl group on carbon 2 of heme B porphyrin ring with a hydroxyethyl farnesyl side group. The polypeptide is Protoheme IX farnesyltransferase (Nocardia farcinica (strain IFM 10152)).